A 337-amino-acid polypeptide reads, in one-letter code: 2-oxoglutarate-dependent dioxygenase 19 (337 aa).

Residues methionine 1–proline 25 are disordered. The Fe2OG dioxygenase domain maps to asparagine 179–proline 283. 3 residues coordinate Fe cation: histidine 208, aspartate 210, and histidine 264. Arginine 274 provides a ligand contact to 2-oxoglutarate.

Belongs to the iron/ascorbate-dependent oxidoreductase family. Fe(2+) serves as cofactor. The cofactor is L-ascorbate. In terms of tissue distribution, expressed in shoots.

Its subcellular location is the cytoplasm. The catalysed reaction is melatonin + 2-oxoglutarate + O2 = 2-hydroxymelatonin + succinate + CO2. In terms of biological role, involved in melatonin degradation. Catalyzes the hydroxylation of melatonin to produce 2-hydroxymelatonin. The chain is 2-oxoglutarate-dependent dioxygenase 19 from Oryza sativa subsp. japonica (Rice).